We begin with the raw amino-acid sequence, 125 residues long: Large ribosomal subunit protein bL20 (125 aa).

Belongs to the bacterial ribosomal protein bL20 family.

Its function is as follows. Binds directly to 23S ribosomal RNA and is necessary for the in vitro assembly process of the 50S ribosomal subunit. It is not involved in the protein synthesizing functions of that subunit. The protein is Large ribosomal subunit protein bL20 of Methylobacterium radiotolerans (strain ATCC 27329 / DSM 1819 / JCM 2831 / NBRC 15690 / NCIMB 10815 / 0-1).